A 188-amino-acid chain; its full sequence is UPF0301 protein XF_2228 (188 aa).

Belongs to the UPF0301 (AlgH) family.

This chain is UPF0301 protein XF_2228, found in Xylella fastidiosa (strain 9a5c).